The sequence spans 389 residues: MGKMAAAVASLATLAAEPREDAFRKLFRFYRQSRPGTADLGAVIDFSEAHLARSPKPGVPQVVRFPLNVSSVTERDAERVGLEPVSKWRAYGLEGYPGFIFIPNPFLPGCQRHWVKQCLKLYSQKPNVCNLDKHMTKEETQGLWEQSKEVLRSKEVTKRRPRSLLERLRWVTLGYHYNWDSKKYSADHYTPFPSDLAFLSEQVATACGFQGFQAEAGILNYYRLDSTLGIHVDRSELDHSKPLLSFSFGQSAIFLLGGLKRDEAPTAMFMHSGDIMVMSGFSRLLNHAVPRVLPHPDGECLPHCLETPLPAVLPSNSLVEPCSVEDWQVCATYLRTARVNMTVRQVLATGQDFPLEPVEETKRDIAADGLCHLHDPNSPVKRKRLNPNS.

The interval 1–127 is interaction with DNAJB6; it reads MGKMAAAVAS…CLKLYSQKPN (127 aa). A tRNA-binding region spans residues 86–389; the sequence is SKWRAYGLEG…VKRKRLNPNS (304 aa). Substrate contacts are provided by residues Trp-144 and 175 to 177; that span reads YHY. Residues 213 to 347 enclose the Fe2OG dioxygenase domain; the sequence is QAEAGILNYY…RVNMTVRQVL (135 aa). 220 to 222 contacts 2-oxoglutarate; that stretch reads NYY. His-231, Asp-233, and His-287 together coordinate Fe cation. Asp-233 serves as a coordination point for substrate. Residue 338–344 coordinates 2-oxoglutarate; sequence RVNMTVR.

Monomer. Interacts with DNAJB6. Fe(2+) is required as a cofactor. In adult organs, highly expressed in testis, eye, brain and kidney.

It localises to the nucleus. The enzyme catalyses an N(6)-methyl-2'-deoxyadenosine in DNA + 2-oxoglutarate + O2 = a 2'-deoxyadenosine in DNA + formaldehyde + succinate + CO2. It carries out the reaction 2'-deoxyribonucleotide-(2'-deoxyribose 5'-phosphate)-2'-deoxyribonucleotide-DNA = a 3'-end 2'-deoxyribonucleotide-(2,3-dehydro-2,3-deoxyribose 5'-phosphate)-DNA + a 5'-end 5'-phospho-2'-deoxyribonucleoside-DNA + H(+). It catalyses the reaction a methylated nucleobase within DNA + 2-oxoglutarate + O2 = a nucleobase within DNA + formaldehyde + succinate + CO2. The catalysed reaction is an N(1)-methyladenosine in tRNA + 2-oxoglutarate + O2 = an adenosine in tRNA + formaldehyde + succinate + CO2. The enzyme catalyses 5-methylcytidine(34) in mitochondrial tRNA(Met) + 2 2-oxoglutarate + 2 O2 = 5-formylcytidine(34) in mitochondrial tRNA(Met) + 2 succinate + 2 CO2 + H2O. It carries out the reaction an N(3)-methylcytidine in mRNA + 2-oxoglutarate + O2 = a cytidine in mRNA + formaldehyde + succinate + CO2. It catalyses the reaction N(1)-methyladenosine(58) in tRNA + 2-oxoglutarate + O2 = adenosine(58) in tRNA + formaldehyde + succinate + CO2. Functionally, dioxygenase that acts on nucleic acids, such as DNA and tRNA. Requires molecular oxygen, alpha-ketoglutarate and iron. A number of activities have been described for this dioxygenase, but recent results suggest that it mainly acts on tRNAs and mediates their demethylation or oxidation depending on the context and subcellular compartment. Mainly acts as a tRNA demethylase by removing N(1)-methyladenine from various tRNAs, with a preference for N(1)-methyladenine at position 58 (m1A58) present on a stem loop structure of tRNAs. Acts as a regulator of translation initiation and elongation in response to glucose deprivation: regulates both translation initiation, by mediating demethylation of tRNA(Met), and translation elongation, N(1)-methyladenine-containing tRNAs being preferentially recruited to polysomes to promote translation elongation. In mitochondrion, specifically interacts with mt-tRNA(Met) and mediates oxidation of mt-tRNA(Met) methylated at cytosine(34) to form 5-formylcytosine (f(5)c) at this position. mt-tRNA(Met) containing the f(5)c modification at the wobble position enables recognition of the AUA codon in addition to the AUG codon, expanding codon recognition in mitochondrial translation. Specifically demethylates DNA methylated on the 6th position of adenine (N(6)-methyladenosine) DNA. N(6)-methyladenosine (m6A) DNA is present at some L1 elements in embryonic stem cells and probably promotes their silencing. Demethylates mRNAs containing N(3)-methylcytidine modification. Also able to repair alkylated single-stranded DNA by oxidative demethylation, but with low activity. Also has DNA lyase activity and introduces double-stranded breaks at abasic sites: cleaves both single-stranded DNA and double-stranded DNA at abasic sites, with the greatest activity towards double-stranded DNA with two abasic sites. DNA lyase activity does not require alpha-ketoglutarate and iron and leads to the formation of an irreversible covalent protein-DNA adduct with the 5' DNA product. DNA lyase activity is not required during base excision repair and class switch recombination of the immunoglobulin heavy chain during B lymphocyte activation. May play a role in placental trophoblast lineage differentiation. The chain is Nucleic acid dioxygenase ALKBH1 from Mus musculus (Mouse).